A 108-amino-acid chain; its full sequence is Phosphoribosyl-AMP cyclohydrolase (108 aa).

Residue Asp-72 participates in Mg(2+) binding. Cys-73 provides a ligand contact to Zn(2+). Asp-74 and Asp-76 together coordinate Mg(2+). Zn(2+) is bound by residues Cys-89 and Cys-96.

Belongs to the PRA-CH family. Homodimer. The cofactor is Mg(2+). Zn(2+) serves as cofactor.

It is found in the cytoplasm. It carries out the reaction 1-(5-phospho-beta-D-ribosyl)-5'-AMP + H2O = 1-(5-phospho-beta-D-ribosyl)-5-[(5-phospho-beta-D-ribosylamino)methylideneamino]imidazole-4-carboxamide. The protein operates within amino-acid biosynthesis; L-histidine biosynthesis; L-histidine from 5-phospho-alpha-D-ribose 1-diphosphate: step 3/9. Catalyzes the hydrolysis of the adenine ring of phosphoribosyl-AMP. The chain is Phosphoribosyl-AMP cyclohydrolase from Archaeoglobus fulgidus (strain ATCC 49558 / DSM 4304 / JCM 9628 / NBRC 100126 / VC-16).